The following is a 338-amino-acid chain: Phenylalanine--tRNA ligase alpha subunit (338 aa).

Glu253 is a Mg(2+) binding site.

Belongs to the class-II aminoacyl-tRNA synthetase family. Phe-tRNA synthetase alpha subunit type 1 subfamily. In terms of assembly, tetramer of two alpha and two beta subunits. Requires Mg(2+) as cofactor.

The protein localises to the cytoplasm. It catalyses the reaction tRNA(Phe) + L-phenylalanine + ATP = L-phenylalanyl-tRNA(Phe) + AMP + diphosphate + H(+). The polypeptide is Phenylalanine--tRNA ligase alpha subunit (Geotalea daltonii (strain DSM 22248 / JCM 15807 / FRC-32) (Geobacter daltonii)).